The chain runs to 146 residues: MFRGNHPTRVDEKGRLKLPADFKRRIDEQYGSQFFITSKDGKVAEIYPLQEWEKVEQKLAQIPNMNPAKKKFLDRVNYYGQMVEMDAQGRVLLPQILRESAQVTGDVVVFGMQSYLEVANHEAFKQNMELNPMTAEDEQALAEFGL.

2 SpoVT-AbrB domains span residues 5 to 51 and 80 to 123; these read NHPT…PLQE and GQMV…NHEA.

The protein belongs to the MraZ family. In terms of assembly, forms oligomers.

It localises to the cytoplasm. Its subcellular location is the nucleoid. The sequence is that of Transcriptional regulator MraZ from Acidobacterium capsulatum (strain ATCC 51196 / DSM 11244 / BCRC 80197 / JCM 7670 / NBRC 15755 / NCIMB 13165 / 161).